Consider the following 635-residue polypeptide: GDP-Man:Man(3)GlcNAc(2)-PP-Dol alpha-1,2-mannosyltransferase (635 aa).

Residues 1–21 are Lumenal-facing; sequence MALQLDLPTLHDLRVVLNADF. The helical transmembrane segment at 22–42 threads the bilayer; that stretch reads LAALAALLLLAVILVPLCSYI. Residues 43-231 lie on the Cytoplasmic side of the membrane; sequence SLYAWSAILA…RLVDPKTWPR (189 aa). The helical intramembrane region spans 232–252; the sequence is FTLMMQAAGSVWMAWHGISTL. The Cytoplasmic portion of the chain corresponds to 253-481; sequence VPDVFVDTMG…MGVNAMWNEH (229 aa). The segment at residues 482–502 is an intramembrane region (helical); sequence FGIVVVEYMSAGLIPVVHNSG. Residues 503–635 lie on the Cytoplasmic side of the membrane; it reads GPKCDIVVPY…GHRLTRGDFD (133 aa).

This sequence belongs to the glycosyltransferase group 1 family.

The protein resides in the endoplasmic reticulum membrane. It catalyses the reaction an alpha-D-Man-(1-&gt;3)-[alpha-D-Man-(1-&gt;6)]-beta-D-Man-(1-&gt;4)-beta-D-GlcNAc-(1-&gt;4)-alpha-D-GlcNAc-diphospho-di-trans,poly-cis-dolichol + 2 GDP-alpha-D-mannose = an alpha-D-Man-(1-&gt;2)-alpha-D-Man-(1-&gt;2)-alpha-D-Man-(1-&gt;3)-[alpha-D-Man-(1-&gt;6)]-beta-D-Man-(1-&gt;4)-beta-D-GlcNAc-(1-&gt;4)-alpha-D-GlcNAc-diphospho-di-trans,poly-cis-dolichol + 2 GDP + 2 H(+). The protein operates within protein modification; protein glycosylation. Its function is as follows. GDP-Man:Man(3)GlcNAc(2)-PP-Dol alpha-1,2-mannosyltransferase that operates in the biosynthetic pathway of dolichol-linked oligosaccharides, the glycan precursors employed in protein asparagine (N)-glycosylation. The assembly of dolichol-linked oligosaccharides begins on the cytosolic side of the endoplasmic reticulum membrane and finishes in its lumen. The sequential addition of sugars to dolichol pyrophosphate produces dolichol-linked oligosaccharides containing fourteen sugars, including two GlcNAcs, nine mannoses and three glucoses. Once assembled, the oligosaccharide is transferred from the lipid to nascent proteins by oligosaccharyltransferases. Catalyzes, on the cytoplasmic face of the endoplasmic reticulum, the addition of the fourth and fifth mannose residues to the dolichol-linked oligosaccharide chain, to produce Man(5)GlcNAc(2)-PP-dolichol core oligosaccharide. The protein is GDP-Man:Man(3)GlcNAc(2)-PP-Dol alpha-1,2-mannosyltransferase (ALG11) of Yarrowia lipolytica (strain CLIB 122 / E 150) (Yeast).